Here is a 280-residue protein sequence, read N- to C-terminus: Ribosomal protein L11 methyltransferase (280 aa).

S-adenosyl-L-methionine contacts are provided by T130, G151, D172, and N213.

The protein belongs to the methyltransferase superfamily. PrmA family.

It localises to the cytoplasm. The enzyme catalyses L-lysyl-[protein] + 3 S-adenosyl-L-methionine = N(6),N(6),N(6)-trimethyl-L-lysyl-[protein] + 3 S-adenosyl-L-homocysteine + 3 H(+). Functionally, methylates ribosomal protein L11. This Nitratiruptor sp. (strain SB155-2) protein is Ribosomal protein L11 methyltransferase.